The primary structure comprises 69 residues: Cold shock-like protein CspC (69 aa).

In terms of domain architecture, CSD spans 6-66 (GQVKWFNESK…GQKGPAAVNV (61 aa)).

Its subcellular location is the cytoplasm. This chain is Cold shock-like protein CspC (cspC), found in Escherichia coli O157:H7.